The sequence spans 303 residues: Sulfotransferase 6B1 (303 aa).

65 to 70 lines the 3'-phosphoadenylyl sulfate pocket; the sequence is KCGSNW. The active-site Proton acceptor is His-118. Residues Arg-140, Ser-148, Tyr-203, 237–242, and 259–261 contribute to the 3'-phosphoadenylyl sulfate site; these read STFQAM and RKG.

The protein belongs to the sulfotransferase 1 family.

The protein resides in the cytoplasm. It is found in the cytosol. The enzyme catalyses thyroxine + 3'-phosphoadenylyl sulfate = thyroxine sulfate + adenosine 3',5'-bisphosphate + H(+). Its function is as follows. Sulfotransferase that utilizes 3'-phospho-5'-adenylyl sulfate (PAPS) as sulfonate donor to catalyze the sulfate conjugation of thyroxine. Involved in the metabolism of thyroxine. This Gorilla gorilla gorilla (Western lowland gorilla) protein is Sulfotransferase 6B1 (SULT6B1).